The primary structure comprises 107 residues: Protein TAP1 (107 aa).

The N-terminal stretch at 1 to 23 (MESKRVDVLVGLMLIMAIFGVHS) is a signal peptide.

As to expression, stamen.

The chain is Protein TAP1 (TAP1) from Antirrhinum majus (Garden snapdragon).